The following is a 672-amino-acid chain: Transcription factor tau 91 kDa subunit (672 aa).

Residues Met1–Arg158 form a required for DNA-binding region. The segment at residues Ala6–Ala18 is a DNA-binding region (a.T hook). 2 disordered regions span residues Ser24 to Lys45 and Val67 to Pro156. Residues Asp71–Leu100 show a composition bias toward acidic residues. A sufficient for interaction with TFC8 region spans residues Leu159–Ser672. Cysteines 375 and 383 form a disulfide.

Heterodimer with TFC8. Component of the TFIIIC complex composed of TFC1, TFC3, TFC4, TFC6, TFC7 and TFC8. The subunits are organized in two globular domains, tauA and tauB, connected by a proteolysis-sensitive and flexible linker. Interacts with TFC1, TFC3, TFC4 and directly with TFC8.

It is found in the nucleus. TFIIIC mediates tRNA and 5S RNA gene activation by binding to intragenic promoter elements. Upstream of the transcription start site, TFIIIC assembles the initiation complex TFIIIB-TFIIIC-tDNA, which is sufficient for RNA polymerase III recruitment and function. Part of the tauB domain of TFIIIC that binds boxB DNA promoter sites of tRNA and similar genes. Cooperates with TFC3 in DNA binding. This is Transcription factor tau 91 kDa subunit (TFC6) from Saccharomyces cerevisiae (strain ATCC 204508 / S288c) (Baker's yeast).